Reading from the N-terminus, the 132-residue chain is ATP synthase epsilon chain (132 aa).

This sequence belongs to the ATPase epsilon chain family. F-type ATPases have 2 components, CF(1) - the catalytic core - and CF(0) - the membrane proton channel. CF(1) has five subunits: alpha(3), beta(3), gamma(1), delta(1), epsilon(1). CF(0) has three main subunits: a, b and c.

It localises to the cell membrane. In terms of biological role, produces ATP from ADP in the presence of a proton gradient across the membrane. The sequence is that of ATP synthase epsilon chain from Clostridium kluyveri (strain NBRC 12016).